The primary structure comprises 517 residues: 2-isopropylmalate synthase (517 aa).

The region spanning 5–267 is the Pyruvate carboxyltransferase domain; sequence VIIFDTTLRD…HTNVRCQEIY (263 aa). Residues D14, H202, H204, and N238 each coordinate Mn(2+). The regulatory domain stretch occupies residues 392 to 517; it reads RLKCFHVDSS…QRKYIKKNNN (126 aa).

It belongs to the alpha-IPM synthase/homocitrate synthase family. LeuA type 1 subfamily. Homodimer. It depends on Mn(2+) as a cofactor.

The protein localises to the cytoplasm. It carries out the reaction 3-methyl-2-oxobutanoate + acetyl-CoA + H2O = (2S)-2-isopropylmalate + CoA + H(+). Its pathway is amino-acid biosynthesis; L-leucine biosynthesis; L-leucine from 3-methyl-2-oxobutanoate: step 1/4. Its function is as follows. Catalyzes the condensation of the acetyl group of acetyl-CoA with 3-methyl-2-oxobutanoate (2-ketoisovalerate) to form 3-carboxy-3-hydroxy-4-methylpentanoate (2-isopropylmalate). This is 2-isopropylmalate synthase from Blochmanniella pennsylvanica (strain BPEN).